The chain runs to 373 residues: Chaperone protein DnaJ (373 aa).

A J domain is found at 5–70 (DYYEVLGVHR…QQRVIYDQYG (66 aa)). The CR-type zinc-finger motif lies at 136 to 214 (GLETKIQIPR…CHGSGRVRGK (79 aa)). 8 residues coordinate Zn(2+): Cys149, Cys152, Cys166, Cys169, Cys188, Cys191, Cys202, and Cys205. CXXCXGXG motif repeat units follow at residues 149–156 (CGTCDGIG), 166–173 (CPTCQGAG), 188–195 (CPECNGEG), and 202–209 (CEECHGSG).

The protein belongs to the DnaJ family. As to quaternary structure, homodimer. Zn(2+) serves as cofactor.

It localises to the cytoplasm. Functionally, participates actively in the response to hyperosmotic and heat shock by preventing the aggregation of stress-denatured proteins and by disaggregating proteins, also in an autonomous, DnaK-independent fashion. Unfolded proteins bind initially to DnaJ; upon interaction with the DnaJ-bound protein, DnaK hydrolyzes its bound ATP, resulting in the formation of a stable complex. GrpE releases ADP from DnaK; ATP binding to DnaK triggers the release of the substrate protein, thus completing the reaction cycle. Several rounds of ATP-dependent interactions between DnaJ, DnaK and GrpE are required for fully efficient folding. Also involved, together with DnaK and GrpE, in the DNA replication of plasmids through activation of initiation proteins. This chain is Chaperone protein DnaJ, found in Syntrophotalea carbinolica (strain DSM 2380 / NBRC 103641 / GraBd1) (Pelobacter carbinolicus).